The sequence spans 164 residues: Sperm axonemal maintenance protein CFAP97D1 (164 aa).

A coiled-coil region spans residues L61–A88.

Belongs to the CFAP97 family. Expressed exclusively in testis.

In terms of biological role, required for male fertility through its role in axonemal doublet stabilization which is essential for sperm motility and fertilization. The polypeptide is Sperm axonemal maintenance protein CFAP97D1 (Cfap97d1) (Mus musculus (Mouse)).